The following is a 1396-amino-acid chain: DNA-directed RNA polymerase subunit beta' (1396 aa).

Zn(2+)-binding residues include Cys-73, Cys-75, Cys-88, and Cys-91. 3 residues coordinate Mg(2+): Asp-467, Asp-469, and Asp-471. Residues Cys-817, Cys-891, Cys-898, and Cys-901 each coordinate Zn(2+).

This sequence belongs to the RNA polymerase beta' chain family. As to quaternary structure, the RNAP catalytic core consists of 2 alpha, 1 beta, 1 beta' and 1 omega subunit. When a sigma factor is associated with the core the holoenzyme is formed, which can initiate transcription. It depends on Mg(2+) as a cofactor. Zn(2+) serves as cofactor.

It carries out the reaction RNA(n) + a ribonucleoside 5'-triphosphate = RNA(n+1) + diphosphate. In terms of biological role, DNA-dependent RNA polymerase catalyzes the transcription of DNA into RNA using the four ribonucleoside triphosphates as substrates. The chain is DNA-directed RNA polymerase subunit beta' from Orientia tsutsugamushi (strain Ikeda) (Rickettsia tsutsugamushi).